The primary structure comprises 103 residues: NADH-quinone oxidoreductase subunit K (103 aa).

The next 3 helical transmembrane spans lie at 6-26 (LSHF…GIFL), 32-52 (LVLL…FVAF), and 63-83 (IFVF…LAIL).

The protein belongs to the complex I subunit 4L family. NDH-1 is composed of 14 different subunits. Subunits NuoA, H, J, K, L, M, N constitute the membrane sector of the complex.

The protein resides in the cell inner membrane. The enzyme catalyses a quinone + NADH + 5 H(+)(in) = a quinol + NAD(+) + 4 H(+)(out). In terms of biological role, NDH-1 shuttles electrons from NADH, via FMN and iron-sulfur (Fe-S) centers, to quinones in the respiratory chain. The immediate electron acceptor for the enzyme in this species is believed to be ubiquinone. Couples the redox reaction to proton translocation (for every two electrons transferred, four hydrogen ions are translocated across the cytoplasmic membrane), and thus conserves the redox energy in a proton gradient. This chain is NADH-quinone oxidoreductase subunit K, found in Dechloromonas aromatica (strain RCB).